Reading from the N-terminus, the 261-residue chain is Carnitinyl-CoA dehydratase (261 aa).

E111 serves as the catalytic Nucleophile. E131 functions as the Proton acceptor in the catalytic mechanism.

The protein belongs to the enoyl-CoA hydratase/isomerase family.

It catalyses the reaction (R)-carnitinyl-CoA = crotonobetainyl-CoA + H2O. It functions in the pathway amine and polyamine metabolism; carnitine metabolism. Functionally, catalyzes the reversible dehydration of L-carnitinyl-CoA to crotonobetainyl-CoA. The sequence is that of Carnitinyl-CoA dehydratase from Escherichia coli O6:K15:H31 (strain 536 / UPEC).